The chain runs to 559 residues: Dihydroxy-acid dehydratase (559 aa).

Cysteine 56 contacts [2Fe-2S] cluster. A Mg(2+)-binding site is contributed by aspartate 88. Cysteine 129 contacts [2Fe-2S] cluster. Aspartate 130 and lysine 131 together coordinate Mg(2+). N6-carboxylysine is present on lysine 131. Position 198 (cysteine 198) interacts with [2Fe-2S] cluster. Glutamate 449 is a Mg(2+) binding site. Residue serine 475 is the Proton acceptor of the active site.

The protein belongs to the IlvD/Edd family. Homodimer. The cofactor is [2Fe-2S] cluster. Mg(2+) serves as cofactor.

It carries out the reaction (2R)-2,3-dihydroxy-3-methylbutanoate = 3-methyl-2-oxobutanoate + H2O. It catalyses the reaction (2R,3R)-2,3-dihydroxy-3-methylpentanoate = (S)-3-methyl-2-oxopentanoate + H2O. Its pathway is amino-acid biosynthesis; L-isoleucine biosynthesis; L-isoleucine from 2-oxobutanoate: step 3/4. The protein operates within amino-acid biosynthesis; L-valine biosynthesis; L-valine from pyruvate: step 3/4. Functions in the biosynthesis of branched-chain amino acids. Catalyzes the dehydration of (2R,3R)-2,3-dihydroxy-3-methylpentanoate (2,3-dihydroxy-3-methylvalerate) into 2-oxo-3-methylpentanoate (2-oxo-3-methylvalerate) and of (2R)-2,3-dihydroxy-3-methylbutanoate (2,3-dihydroxyisovalerate) into 2-oxo-3-methylbutanoate (2-oxoisovalerate), the penultimate precursor to L-isoleucine and L-valine, respectively. The protein is Dihydroxy-acid dehydratase of Ruthia magnifica subsp. Calyptogena magnifica.